Consider the following 516-residue polypeptide: Serine carboxypeptidase-like 49 (516 aa).

Residues 1–22 form the signal peptide; sequence MEKLTFLSLLLHFVVFIASTIP. A propeptide spanning residues 23–82 is cleaved from the precursor; it reads SSSFLLNDRTFERSNLPSTRAEKLIRELNLFPQQDLNVIDVADLPLTAAEGPGIVERKFV. 3 disulfides stabilise this stretch: C139/C379, C307/C322, and C345/C350. N157 is a glycosylation site (N-linked (GlcNAc...) asparagine). S229 is a catalytic residue. D417 is an active-site residue. C420 contributes to the substrate binding site. H474 is an active-site residue.

It belongs to the peptidase S10 family. As to expression, expressed in roots, senescent leaves and flowers.

The protein resides in the secreted. Its function is as follows. Probable carboxypeptidase. The sequence is that of Serine carboxypeptidase-like 49 (SCPL49) from Arabidopsis thaliana (Mouse-ear cress).